Here is a 789-residue protein sequence, read N- to C-terminus: Glycerol-3-phosphate acyltransferase (789 aa).

The short motif at 275–280 is the HXXXXD motif element; that stretch reads SHRSYI.

Belongs to the GPAT/DAPAT family.

The protein localises to the cell membrane. The enzyme catalyses sn-glycerol 3-phosphate + an acyl-CoA = a 1-acyl-sn-glycero-3-phosphate + CoA. The protein operates within phospholipid metabolism; CDP-diacylglycerol biosynthesis; CDP-diacylglycerol from sn-glycerol 3-phosphate: step 1/3. This chain is Glycerol-3-phosphate acyltransferase, found in Mycobacterium bovis (strain BCG / Pasteur 1173P2).